The chain runs to 863 residues: Leucine--tRNA ligase (863 aa).

A 'HIGH' region motif is present at residues 41–51 (PYPSGRIHIGH). Positions 627–631 (KMSKS) match the 'KMSKS' region motif. Lys-630 serves as a coordination point for ATP.

This sequence belongs to the class-I aminoacyl-tRNA synthetase family.

It is found in the cytoplasm. It carries out the reaction tRNA(Leu) + L-leucine + ATP = L-leucyl-tRNA(Leu) + AMP + diphosphate. In Jannaschia sp. (strain CCS1), this protein is Leucine--tRNA ligase.